The sequence spans 1311 residues: Clustered mitochondria protein homolog (1311 aa).

Low complexity predominate over residues Met-1 to Pro-18. Residues Met-1–Asp-27 form a disordered region. The Clu domain occupies Asp-324–Gln-568. The TPR 1 repeat unit spans residues Ile-491–Ala-525. The segment covering Ser-606 to Glu-630 has biased composition (basic and acidic residues). Disordered stretches follow at residues Ser-606–Arg-694 and Pro-925–Ile-966. A compositionally biased stretch (acidic residues) spans Ser-631–Glu-661. Basic residues predominate over residues Pro-665 to Ala-675. A compositionally biased stretch (basic and acidic residues) spans Lys-676 to Arg-694. TPR repeat units lie at residues Ala-1034 to Thr-1067, Leu-1076 to Ile-1109, and Ile-1118 to Val-1151. The segment covering Leu-1276–Lys-1286 has biased composition (basic and acidic residues). The disordered stretch occupies residues Leu-1276–Ala-1311. Over residues Lys-1287–Arg-1301 the composition is skewed to basic residues.

It belongs to the CLU family. May associate with the eukaryotic translation initiation factor 3 (eIF-3) complex.

The protein localises to the cytoplasm. In terms of biological role, mRNA-binding protein involved in proper cytoplasmic distribution of mitochondria. The chain is Clustered mitochondria protein homolog from Pyricularia oryzae (strain 70-15 / ATCC MYA-4617 / FGSC 8958) (Rice blast fungus).